Here is a 634-residue protein sequence, read N- to C-terminus: UPF0313 protein PG_0934 (634 aa).

One can recognise a Radical SAM core domain in the interval 302–582 (AYEMIKHSVN…RQHMFFFWYK (281 aa)). Residues Cys316, Cys320, and Cys323 each coordinate [4Fe-4S] cluster. Residues 607–634 (DRTTSSRNDRHTPPSTQPRKSKSKSRHS) are disordered. A compositionally biased stretch (basic residues) spans 625–634 (RKSKSKSRHS).

The protein belongs to the UPF0313 family. [4Fe-4S] cluster serves as cofactor.

The chain is UPF0313 protein PG_0934 from Porphyromonas gingivalis (strain ATCC BAA-308 / W83).